Consider the following 168-residue polypeptide: MFQIPEFEPSEQEDSSSAERGLGPSPAGDGPSGSGKHHRQAPGLLWDASHQQEQPTSSSHHGGAGAVEIRSRHSSYPAGTEDDEGMGEEPSPFRGRSRSAPPNLWAAQRYGRELRRMSDEFVDSFKKGLPRPKSAGTATQMRQSSSWTRVFQSWWDRNLGRGSSAPSQ.

An N-acetylmethionine modification is found at M1. Positions 1–105 are disordered; it reads MFQIPEFEPS…RSRSAPPNLW (105 aa). Phosphoserine is present on S25. The span at 49-60 shows a compositional bias: polar residues; sequence SHQQEQPTSSSH. Phosphoserine is present on residues S75 and S91. R94 and R96 each carry asymmetric dimethylarginine; by PRMT1. Phosphoserine is present on S97. The residue at position 99 (S99) is a Phosphoserine; by PKA, PKB, PAK1, RPS6KA1, RPS6KB1 and PKC/PRKCQ. S99 carries the phosphoserine; by PKB/AKT1 modification. The short motif at 110–124 is the BH3 element; sequence YGRELRRMSDEFVDS. Residues S118 and S134 each carry the phosphoserine modification. A disordered region spans residues 125–145; it reads FKKGLPRPKSAGTATQMRQSS. Positions 136 to 145 are enriched in polar residues; it reads GTATQMRQSS. R161 carries the post-translational modification Omega-N-methylarginine.

Belongs to the Bcl-2 family. In terms of assembly, forms heterodimers with the anti-apoptotic proteins, Bcl-X(L), Bcl-2 and Bcl-W. Also binds protein S100A10. The Ser-75/Ser-99 phosphorylated form binds 14-3-3 proteins. Interacts with AKT1 and PIM3. Interacts (via BH3 domain) with NOL3 (via CARD domain); preventing the association of BAD with BCL2. Interacts with HIF3A (via C-terminus domain); the interaction reduces the binding between BAD and BAX. Interacts with GIMAP3/IAN4 and GIMAP5/IAN5. Post-translationally, phosphorylated on one or more of Ser-75, Ser-99, Ser-118 and Ser-134 in response to survival stimuli, which blocks its pro-apoptotic activity. Phosphorylation on Ser-99 or Ser-75 promotes heterodimerization with 14-3-3 proteins. This interaction then facilitates the phosphorylation at Ser-118, a site within the BH3 motif, leading to the release of Bcl-X(L) and the promotion of cell survival. Ser-99 is the major site of AKT/PKB phosphorylation, Ser-118 the major site of protein kinase A (CAPK) phosphorylation. Phosphorylation at Ser-99 by PKB/AKT1 is almost completely blocked by the apoptotic C-terminus cleavage product of PKN2 generated by caspases-3 activity during apoptosis. Methylation at Arg-94 and Arg-96 by PRMT1 inhibits Akt-mediated phosphorylation at Ser-99. Expressed in a wide variety of tissues.

It localises to the mitochondrion outer membrane. The protein localises to the cytoplasm. Its function is as follows. Promotes cell death. Successfully competes for the binding to Bcl-X(L), Bcl-2 and Bcl-W, thereby affecting the level of heterodimerization of these proteins with BAX. Can reverse the death repressor activity of Bcl-X(L), but not that of Bcl-2. Appears to act as a link between growth factor receptor signaling and the apoptotic pathways. The polypeptide is Bcl2-associated agonist of cell death (BAD) (Homo sapiens (Human)).